We begin with the raw amino-acid sequence, 115 residues long: Iron-sulfur cluster insertion protein ErpA (115 aa).

Residues C43, C107, and C109 each coordinate iron-sulfur cluster.

Belongs to the HesB/IscA family. As to quaternary structure, homodimer. It depends on iron-sulfur cluster as a cofactor.

Functionally, required for insertion of 4Fe-4S clusters for at least IspG. The sequence is that of Iron-sulfur cluster insertion protein ErpA from Photorhabdus laumondii subsp. laumondii (strain DSM 15139 / CIP 105565 / TT01) (Photorhabdus luminescens subsp. laumondii).